The chain runs to 8922 residues: Protein clarinet (8922 aa).

The disordered stretch occupies residues 11–35 (SKGPPLEEVREESEEDAQVPEQVVS). A compositionally biased stretch (acidic residues) spans 19-28 (VREESEEDAQ). Residues 385 to 405 (KDETKLILKSVEDKLETTEIE) are a coiled coil. Disordered stretches follow at residues 527-579 (QEAA…EPEL), 622-673 (IVIS…EPEL), 687-860 (LAEK…KEPE), 880-955 (SFEQ…EPEL), 971-1049 (EQSS…EPEL), 1062-1139 (SSAE…MESR), 1151-1331 (IARI…EPEL), 1347-1420 (EQSS…VMES), 1444-1520 (SFEQ…PELT), 1538-1619 (SFEQ…EEID), 1632-1710 (SFEQ…LTQE), 1726-1801 (SFEQ…VPEL), 1820-1898 (SFEQ…LTQE), 1939-1992 (VISE…LTQE), 2032-2084 (IVIS…SELT), 2126-2175 (IVIS…SKEP), 2194-2213 (QSSFEQASTITDRPPLPVRL), 2220-2246 (IVISEQHEGDRSSATPGADYERSYDQD), 2329-2403 (SFEQ…KKPE), 2423-2497 (SFEQ…KPEL), 2516-2594 (SFEQ…LTQE), 2610-2684 (SFEQ…KEPE), 2704-2845 (SFEQ…ERPF), 2892-2963 (SFEQ…MESK), 2983-3155 (EQSS…EPEL), 3171-3249 (EQSS…EPEL), 3268-3337 (SFEQ…PVML), 3619-3639 (SITPSEGDDGGSSETGHPTTD), 3995-4079 (AEPV…QEEI), 4117-4169 (IVIS…PELT), 4181-4271 (SLAE…STTI), 4557-4624 (QASA…TQEE), 4636-4656 (EQSSFEQASTIPDRPPLPVRL), 4666-4685 (SEQHEGDISSATSGADYERS), 4730-4801 (EQSS…GVTQ), 4855-4899 (PANP…PLQD), 5004-5036 (PEDFSEATSGADTESISETTANKKDSNDSNGLT), 5360-5379 (LAMFTNPSPSASPSLLRKES), 5390-5413 (RRSSGADSRASNDSSASRLPDTAL), 5484-5511 (KKQISSRTESTNSRVSSEGIDEEVENEV), 5540-5572 (PPIAISHPTPPHSAKTDTGSRHSSGSSAHSQFG), 6194-6303 (AEPV…ESES), 6354-6437 (DVES…GSRM), 6487-6510 (SSKSSTSLGTSAPTKSIPSPQIGI), 6577-6609 (ARFPPPSSQIPTRSPSVMSSSIMSELPPGLDDL), 6668-6691 (NAETDSSSSVITSRQPSRSPSVAR), 6728-6768 (AEFE…VPPG), 6998-7018 (TERKQREESPTRESGYATSTS), 7045-7098 (ARSR…DDFD), 7137-7175 (FDGDESELPHQDFVFNEPTTKKTSDFDFPKETDEVFEKP), 7202-7263 (EAPS…YPDR), 7313-7350 (KTTTSQTPSTSTKPTVTAPKRSDPIPIAPSQRSKEIEE), 7598-7623 (DSVRDDNERNENETTSPRGLKRSPGM), 7760-7797 (TRRHQHQQQHQAPVYITSSASRPPSAAGSNIFQESRPT), and 7842-7881 (HIRQPVSVRSPRAQTGTTQTTAASGSASNSIRPSIGSSSV). Residues 531 to 552 (SDNHEKERSSATSKADYERSFD) show a composition bias toward basic and acidic residues. Residues 760–776 (MESKEPELTQEEIDHIA) show a composition bias toward basic and acidic residues. Residues 1062-1076 (SSAEQSSFEQASTVP) are compositionally biased toward low complexity. Residues 1230–1244 (MESKEPELTQEEIDH) are compositionally biased toward basic and acidic residues. Positions 1251-1261 (IAEQSSFEQAS) are enriched in polar residues. Composition is skewed to basic and acidic residues over residues 1606–1619 (MESKEPELTQEEID) and 1700–1710 (MESKEPELTQE). Composition is skewed to basic and acidic residues over residues 1888–1898 (MESKEPELTQE) and 1982–1992 (MESKESELTQE). Residues 2194 to 2204 (QSSFEQASTIT) show a composition bias toward polar residues. The span at 2584–2594 (MESKEPELTQE) shows a compositional bias: basic and acidic residues. The segment covering 2772–2788 (MESKEPELTQEEIDHIA) has biased composition (basic and acidic residues). Residues 2793–2803 (LAEQSSFEQAS) show a composition bias toward polar residues. Residues 3076–3085 (APSSSFEQAS) show a composition bias toward polar residues. Positions 4035 to 4044 (GTSFPDNAET) are enriched in polar residues. The segment covering 4065-4079 (PVMKSKEPELTQEEI) has biased composition (basic and acidic residues). 3 stretches are compositionally biased toward polar residues: residues 4182-4195 (LAEQSSFEQTSTIP), 4223-4234 (SATSGADYQQSF), and 4255-4271 (MESTQPELTQDHSSTTI). Residues 4571–4580 (IVEKREDDKS) show a composition bias toward basic and acidic residues. Residues 4581-4594 (NITSGADYQQSFDQ) show a composition bias toward polar residues. Over residues 4613–4624 (MESKEPELTQEE) the composition is skewed to basic and acidic residues. Residues 4636–4645 (EQSSFEQAST) show a composition bias toward polar residues. The span at 4730–4739 (EQSSFEQAST) shows a compositional bias: polar residues. A compositionally biased stretch (low complexity) spans 4871-4890 (EGSSSATSGADIPSSFDISS). The segment covering 5009-5023 (EATSGADTESISETT) has biased composition (polar residues). Over residues 5390-5407 (RRSSGADSRASNDSSASR) the composition is skewed to low complexity. The segment covering 5486–5499 (QISSRTESTNSRVS) has biased composition (polar residues). The segment covering 5540 to 5550 (PPIAISHPTPP) has biased composition (pro residues). The span at 5560-5572 (RHSSGSSAHSQFG) shows a compositional bias: low complexity. Polar residues-rich tracts occupy residues 6225–6245 (ASSGASGSFDNNNAQVLTSGF) and 6270–6284 (KTVSPTPSADSMASR). 2 stretches are compositionally biased toward basic and acidic residues: residues 6285-6303 (KSSEYDIRSISEIRQESES) and 6376-6422 (GEGE…EESL). The span at 6494–6505 (LGTSAPTKSIPS) shows a compositional bias: polar residues. A compositionally biased stretch (low complexity) spans 6590-6600 (SPSVMSSSIMS). A compositionally biased stretch (polar residues) spans 6670 to 6687 (ETDSSSSVITSRQPSRSP). Low complexity predominate over residues 6735 to 6747 (SQVPSRQPSRSPS). 2 stretches are compositionally biased toward basic and acidic residues: residues 6998 to 7008 (TERKQREESPT) and 7045 to 7069 (ARSRRDSRDEVLHRREEDPEVHTPE). The span at 7071–7086 (SSTAVVTDVPSVSPVT) shows a compositional bias: low complexity. The segment covering 7155–7175 (TTKKTSDFDFPKETDEVFEKP) has biased composition (basic and acidic residues). Over residues 7248-7260 (SDEESCSEDDEEY) the composition is skewed to acidic residues. A compositionally biased stretch (low complexity) spans 7313–7331 (KTTTSQTPSTSTKPTVTAP). Basic and acidic residues predominate over residues 7599–7609 (SVRDDNERNEN). 2 stretches are compositionally biased toward low complexity: residues 7777-7788 (SSASRPPSAAGS) and 7854-7880 (AQTGTTQTTAASGSASNSIRPSIGSSS). A coiled-coil region spans residues 7895 to 7915 (KKELKDVLIQRKQRLEATEIE). Residues 8510-8562 (SRRRAQETALTSSNKISTGSRSYARRPIRPSSYRNPEATNSMPDRHVARRTAE) are disordered. 2 stretches are compositionally biased toward polar residues: residues 8517-8530 (TALTSSNKISTGSR) and 8541-8551 (SYRNPEATNSM). The segment covering 8552 to 8562 (PDRHVARRTAE) has biased composition (basic and acidic residues). The PDZ domain maps to 8570–8661 (RILLTRSYKH…EIEMVIRTYK (92 aa)). A C2 domain is found at 8714–8835 (CHGHIQVSLG…SAINTGPRWY (122 aa)).

As to expression, expressed in the nervous system.

It is found in the synapse. The protein localises to the cell projection. Its subcellular location is the axon. Functionally, required for synapse development in the active zone of presynaptic terminals of specific neurons including serotonergic NSM neurons. The active zone is a protein-dense neuronal region within the presynaptic bouton, from which synaptic vesicles send neurotransmitter signals across the synapse. Plays a role in the recruitment and clustering of synaptic vesicles in the active zone of presynaptic terminals in serotonergic NSM neurons, and coordinates the release of synaptic vesicles at presynaptic terminals to regulate neurotransmission at neuromuscular junctions. Regulates synapse number in inhibitory motor neurons and plays a role in spontaneous postsynaptic synaptic vesicle release in muscle cells. The protein is Protein clarinet of Caenorhabditis elegans.